The following is a 673-amino-acid chain: Bifunctional lycopene cyclase/phytoene synthase (673 aa).

The segment at 1-251 (MTALAYYQIH…IVLGLSACDH (251 aa)) is lycopene beta-cyclase. 7 consecutive transmembrane segments (helical) span residues 9–29 (IHLI…SPIL), 36–56 (KISI…SWII), 81–101 (YEEY…YVLA), 117–137 (SALS…LFTA), 157–177 (LSLL…EYAF), 187–207 (TIAA…VAVG), and 226–246 (VLPI…VLGL). The tract at residues 258 to 673 (LHGRTIYGNK…SVVMSGWEGQ (416 aa)) is phytoene synthase. The tract at residues 376-399 (KILSSPLLPPSHPSRPTGMYPLPP) is disordered.

It in the N-terminal section; belongs to the lycopene beta-cyclase family. The protein in the C-terminal section; belongs to the phytoene/squalene synthase family.

The protein localises to the membrane. The enzyme catalyses all-trans-lycopene = gamma-carotene. The catalysed reaction is gamma-carotene = all-trans-beta-carotene. It catalyses the reaction 2 (2E,6E,10E)-geranylgeranyl diphosphate = 15-cis-phytoene + 2 diphosphate. The protein operates within carotenoid biosynthesis; beta-carotene biosynthesis. It participates in carotenoid biosynthesis; phytoene biosynthesis; all-trans-phytoene from geranylgeranyl diphosphate: step 1/1. Bifunctional enzyme that catalyzes the reactions from geranylgeranyl diphosphate to phytoene (phytoene synthase) and lycopene to beta-carotene via the intermediate gamma-carotene (lycopene cyclase). The cyclase preferentially catalyzes the symmetric cyclization of both ends of the substrate to produce dicyclic carotenoids. Beta-carotene is further processed to the acidic carotenoid astaxanthin. The chain is Bifunctional lycopene cyclase/phytoene synthase from Phaffia rhodozyma (Yeast).